A 109-amino-acid chain; its full sequence is Nucleoid-associated protein BCE_0021 (109 aa).

It belongs to the YbaB/EbfC family. As to quaternary structure, homodimer.

The protein localises to the cytoplasm. Its subcellular location is the nucleoid. Binds to DNA and alters its conformation. May be involved in regulation of gene expression, nucleoid organization and DNA protection. The chain is Nucleoid-associated protein BCE_0021 from Bacillus cereus (strain ATCC 10987 / NRS 248).